A 1568-amino-acid chain; its full sequence is Kielin/chordin-like protein (1568 aa).

Positions 1-23 are cleaved as a signal peptide; sequence MAGVGAAALSLLLHLGALALAAG. Residues 27–49 form a disordered region; the sequence is GAVPREPPGQQTTAHSSVLAGNS. A compositionally biased stretch (polar residues) spans 35–49; that stretch reads GQQTTAHSSVLAGNS. A coiled-coil region spans residues 60–87; that stretch reads LGRLEAAVMELREQNKDLQTRVRQLESC. 16 consecutive VWFC domains span residues 136-193, 194-253, 253-312, 312-370, 426-485, 485-544, 544-602, 602-661, 667-725, 725-782, 782-841, 900-959, 959-1017, 1017-1085, 1082-1145, and 1149-1209; these read RGCS…PICR, PGCD…PTCQ, QGCT…PVCD, DGCF…PVCD, PACE…PSCD, DSCT…PRCP, PDCI…NDCS, SGCA…PQCP, AGCP…PSCD, DGCL…PDCD, DGCE…PTCQ, HSCL…PRCR, RGCL…PQCS, SDCE…PTCA, PTCA…PVCR, and QSCV…PRCL. The N-linked (GlcNAc...) asparagine glycan is linked to asparagine 340. A glycan (N-linked (GlcNAc...) asparagine) is linked at asparagine 499. The N-linked (GlcNAc...) asparagine glycan is linked to asparagine 1090. The VWFD domain maps to 1213–1389; the sequence is ASCMAFGDPH…EGLWPGRPCS (177 aa). 2 disulfides stabilise this stretch: cysteine 1215/cysteine 1347 and cysteine 1237/cysteine 1388. Residues 1483–1543 form the TIL domain; it reads CPLERGFVFD…EAHCIPPEAC (61 aa).

As to quaternary structure, interacts with BMP7 and, by doing so, enhances binding to the type I receptors that contains cytoplasmic serine/threonine protein kinase domains. Also able to interact with activin-A and TGFB1.

The protein localises to the secreted. Enhances bone morphogenetic protein (BMP) signaling in a paracrine manner. In contrast, it inhibits both the activin-A and TGFB1-mediated signaling pathways. The protein is Kielin/chordin-like protein of Homo sapiens (Human).